The chain runs to 471 residues: Coronin-6 (471 aa).

WD repeat units lie at residues 79–119 (GHTG…PVRN), 129–169 (GHSK…VLLS), 173–212 (IHPDVIHSVCWNSNGSLLATTCKDKTLRIIDPRKSQVVAE), 216–259 (PHEG…EPVA), and 264–304 (DTSN…PFVH). Positions 410–433 (ILDVRPPASPRRSQSASEAPLSQH) are disordered. Positions 419–429 (PRRSQSASEAP) are enriched in low complexity. Residues 426 to 468 (SEAPLSQHTLETLLEEIKALRDRVQAQEERITALENMLCELVD) are a coiled coil.

The polypeptide is Coronin-6 (Coro6) (Mus musculus (Mouse)).